A 335-amino-acid polypeptide reads, in one-letter code: tRNA N6-adenosine threonylcarbamoyltransferase (335 aa).

Positions 107 and 111 each coordinate Fe cation. Substrate contacts are provided by residues 129–133 (LVSGG), Asp162, Gly175, and Asn268. Residue Asp296 participates in Fe cation binding.

It belongs to the KAE1 / TsaD family. It depends on Fe(2+) as a cofactor.

Its subcellular location is the cytoplasm. It carries out the reaction L-threonylcarbamoyladenylate + adenosine(37) in tRNA = N(6)-L-threonylcarbamoyladenosine(37) in tRNA + AMP + H(+). In terms of biological role, required for the formation of a threonylcarbamoyl group on adenosine at position 37 (t(6)A37) in tRNAs that read codons beginning with adenine. Is involved in the transfer of the threonylcarbamoyl moiety of threonylcarbamoyl-AMP (TC-AMP) to the N6 group of A37, together with TsaE and TsaB. TsaD likely plays a direct catalytic role in this reaction. This chain is tRNA N6-adenosine threonylcarbamoyltransferase, found in Campylobacter fetus subsp. fetus (strain 82-40).